The primary structure comprises 124 residues: Glycine cleavage system H protein (124 aa).

The Lipoyl-binding domain maps to 22–104 (KAKVGITDFA…YENGYLFIIE (83 aa)). Lys-63 is modified (N6-lipoyllysine).

It belongs to the GcvH family. As to quaternary structure, the glycine cleavage system is composed of four proteins: P, T, L and H. It depends on (R)-lipoate as a cofactor.

Its function is as follows. The glycine cleavage system catalyzes the degradation of glycine. The H protein shuttles the methylamine group of glycine from the P protein to the T protein. The chain is Glycine cleavage system H protein from Endomicrobium trichonymphae.